The primary structure comprises 340 residues: Putative cystathionine beta-lyase (340 aa).

K208 is modified (N6-(pyridoxal phosphate)lysine).

The protein belongs to the trans-sulfuration enzymes family. The cofactor is pyridoxal 5'-phosphate.

It catalyses the reaction L,L-cystathionine + H2O = L-homocysteine + pyruvate + NH4(+). The catalysed reaction is an S-substituted L-cysteine + H2O = a thiol + pyruvate + NH4(+). It participates in amino-acid biosynthesis; L-methionine biosynthesis via de novo pathway; L-homocysteine from L-cystathionine: step 1/1. The chain is Putative cystathionine beta-lyase (IRC7) from Saccharomyces cerevisiae (strain ATCC 204508 / S288c) (Baker's yeast).